Reading from the N-terminus, the 348-residue chain is Nicotinate-nucleotide--dimethylbenzimidazole phosphoribosyltransferase (348 aa).

Glu316 serves as the catalytic Proton acceptor.

Belongs to the CobT family.

The enzyme catalyses 5,6-dimethylbenzimidazole + nicotinate beta-D-ribonucleotide = alpha-ribazole 5'-phosphate + nicotinate + H(+). It functions in the pathway nucleoside biosynthesis; alpha-ribazole biosynthesis; alpha-ribazole from 5,6-dimethylbenzimidazole: step 1/2. Functionally, catalyzes the synthesis of alpha-ribazole-5'-phosphate from nicotinate mononucleotide (NAMN) and 5,6-dimethylbenzimidazole (DMB). The polypeptide is Nicotinate-nucleotide--dimethylbenzimidazole phosphoribosyltransferase (Xanthomonas axonopodis pv. citri (strain 306)).